The primary structure comprises 440 residues: V-type ATP synthase beta chain (440 aa).

It belongs to the ATPase alpha/beta chains family.

Produces ATP from ADP in the presence of a proton gradient across the membrane. The V-type beta chain is a regulatory subunit. The chain is V-type ATP synthase beta chain from Geotalea uraniireducens (strain Rf4) (Geobacter uraniireducens).